A 136-amino-acid polypeptide reads, in one-letter code: MPTIQQLVRKGRETLVEKGKSPALDACPQRRGVCVRVYTTTPKKPNSAMRKVARVRLTNGKEVNSYIPGEGHNLQEHSIVLVRGGRVKDLPGVRYHIVRGTLDTAGVNGRTQRRSKYGAKRPKPGQAAAAAKGKKK.

D89 bears the 3-methylthioaspartic acid mark. The tract at residues 104 to 136 is disordered; sequence TAGVNGRTQRRSKYGAKRPKPGQAAAAAKGKKK. The segment covering 111–123 has biased composition (basic residues); sequence TQRRSKYGAKRPK. Over residues 124-136 the composition is skewed to low complexity; the sequence is PGQAAAAAKGKKK.

This sequence belongs to the universal ribosomal protein uS12 family. As to quaternary structure, part of the 30S ribosomal subunit. Contacts proteins S8 and S17. May interact with IF1 in the 30S initiation complex.

In terms of biological role, with S4 and S5 plays an important role in translational accuracy. Its function is as follows. Interacts with and stabilizes bases of the 16S rRNA that are involved in tRNA selection in the A site and with the mRNA backbone. Located at the interface of the 30S and 50S subunits, it traverses the body of the 30S subunit contacting proteins on the other side and probably holding the rRNA structure together. The combined cluster of proteins S8, S12 and S17 appears to hold together the shoulder and platform of the 30S subunit. In Parabacteroides distasonis (strain ATCC 8503 / DSM 20701 / CIP 104284 / JCM 5825 / NCTC 11152), this protein is Small ribosomal subunit protein uS12.